Consider the following 237-residue polypeptide: MFLTRTEYDRGVNTFSPEGRLFQVEYAIEAIKLGSTAIGLKTKDGVVLAVEKRVTSPLLEPSSVEKIMEIDEHIGCAMSGLIADARTLVEHARVETQNHRFSYGEPMTVESTTQAICDLALRFGEGDEESMSRPFGVSLLIAGHDENGPSLYYTDPSGTFWQCNAKAIGSGSEGADSSLQEQYNKELTLQEAETIALSILKQVMEEKVTPNNVDIAKVSPNYHLYTPAEVEAVIARL.

Belongs to the peptidase T1A family. The 26S proteasome consists of a 20S proteasome core and two 19S regulatory subunits. The 20S proteasome core is composed of 28 subunits that are arranged in four stacked rings, resulting in a barrel-shaped structure. The two end rings are each formed by seven alpha subunits, and the two central rings are each formed by seven beta subunits. The catalytic chamber with the active sites is on the inside of the barrel.

It localises to the cytoplasm. Its subcellular location is the nucleus. The proteasome is a multicatalytic proteinase complex which is characterized by its ability to cleave peptides with Arg, Phe, Tyr, Leu, and Glu adjacent to the leaving group at neutral or slightly basic pH. The proteasome has an ATP-dependent proteolytic activity. The protein is Proteasome subunit alpha type-5 (PAE1) of Oryza sativa subsp. japonica (Rice).